We begin with the raw amino-acid sequence, 484 residues long: Pheophytinase, chloroplastic (484 aa).

The N-terminal 47 residues, 1 to 47, are a transit peptide targeting the chloroplast; sequence MEIISLNVVPQCSVVTWSSKLATKRLVPNRSSLLFSGVKKSRLVIRS.

The protein belongs to the AB hydrolase superfamily. Interacts with HCAR, RCCR, PAO and the LHCII complex. Part of a SGR1-CCE-LHCII complex, which acts in chlorophyll breakdown.

The protein localises to the plastid. The protein resides in the chloroplast thylakoid membrane. It localises to the chloroplast stroma. In terms of biological role, alpha/beta hydrolase dephytylating specifically the Mg-free chlorophyll pigment (pheophytin), yielding pheophorbide. No activity on chlorophyll. Belongs to the chlorophyll catabolic enzymes (CCEs). The chain is Pheophytinase, chloroplastic (PPH) from Arabidopsis thaliana (Mouse-ear cress).